The chain runs to 940 residues: UvrABC system protein A (940 aa).

33 to 40 (GVSGSGKS) is a binding site for ATP. The C4-type zinc-finger motif lies at 252–279 (CPVCGFTVPELEPRLFSFNAPFGSCPDC). ABC transporter domains lie at 309 to 586 (WYGK…KKSL) and 606 to 935 (IDKK…QYLK). An ATP-binding site is contributed by 639 to 646 (GVSGSGKS). Residues 738 to 764 (CEACSGDGIIKIEMHFLPDVYVPCEVC) form a C4-type zinc finger.

Belongs to the ABC transporter superfamily. UvrA family. As to quaternary structure, forms a heterotetramer with UvrB during the search for lesions.

It is found in the cytoplasm. In terms of biological role, the UvrABC repair system catalyzes the recognition and processing of DNA lesions. UvrA is an ATPase and a DNA-binding protein. A damage recognition complex composed of 2 UvrA and 2 UvrB subunits scans DNA for abnormalities. When the presence of a lesion has been verified by UvrB, the UvrA molecules dissociate. In Lactococcus lactis subsp. lactis (strain IL1403) (Streptococcus lactis), this protein is UvrABC system protein A.